A 675-amino-acid polypeptide reads, in one-letter code: Protein kintoun (675 aa).

4 disordered regions span residues 98-131 (ASKK…KQGA), 265-293 (AGEG…TAPP), 310-340 (EGGA…AVAK), and 509-659 (EAAH…AAPT). The segment covering 102-113 (QQQEQEKQEKEQ) has biased composition (basic and acidic residues). Over residues 279-293 (VPGVPDLPGAKTAPP) the composition is skewed to low complexity. Over residues 529–543 (AAAASSGAAPAPAAA) the composition is skewed to low complexity. Residues 544 to 553 (SEEEEEEDKE) are compositionally biased toward acidic residues. Over residues 564–577 (DPAAAAAAAGASSG) the composition is skewed to low complexity. The span at 579–596 (ELTENERKWRELHARQQQ) shows a compositional bias: basic and acidic residues. Composition is skewed to low complexity over residues 604–617 (AAEA…AAAE) and 628–659 (VAQG…AAPT).

It belongs to the PIH1 family. Kintoun subfamily.

The protein resides in the cytoplasm. Its function is as follows. Required for cytoplasmic pre-assembly of axonemal dyneins, thereby playing a central role in motility in cilia and flagella. Involved in pre-assembly of dynein arm complexes in the cytoplasm before intraflagellar transport loads them for the ciliary compartment. This Chlamydomonas reinhardtii (Chlamydomonas smithii) protein is Protein kintoun (pf13).